Here is a 250-residue protein sequence, read N- to C-terminus: MINTGRSRNSVLLAHRFLSTGGFWRGGTNGTMSRTINNVNPFKLKFIPKTVPAAADSVSPDSQRPGKKPFKFIVSNQSKSSKASKSPKWSSYAFPSRETIKSHEEAIKKQNKAIDEQIAAAVSKNDCSCTEPPKKRKRKLRPRKALITLSPKAIKHLRALLAQPEPKLIRVSARNRGCSGLTYDLQYITEPGKFDEVVEQDGVKIVIDSKALFSIIGSEMDWIDDKLASKFVFKNPNSKGTCGCGESFMV.

Residues 54–89 (AADSVSPDSQRPGKKPFKFIVSNQSKSSKASKSPKW) form a disordered region. The span at 75–89 (SNQSKSSKASKSPKW) shows a compositional bias: low complexity. Fe cation-binding residues include Cys178, Cys242, and Cys244.

Belongs to the HesB/IscA family.

It is found in the mitochondrion matrix. Involved in the assembly of mitochondrial and cytoplasmic iron-sulfur proteins. Probably involved in the binding of an intermediate of Fe/S cluster assembly. This is Iron-sulfur assembly protein 1 (ISA1) from Saccharomyces cerevisiae (strain ATCC 204508 / S288c) (Baker's yeast).